A 307-amino-acid chain; its full sequence is Ornithine carbamoyltransferase (307 aa).

Residues 56–59 (STRT), Gln83, Arg107, and 134–137 (HPCQ) each bind carbamoyl phosphate. L-ornithine contacts are provided by residues Asn165, Asp223, and 227-228 (SM). Carbamoyl phosphate-binding positions include 263–264 (CL) and Arg291.

This sequence belongs to the aspartate/ornithine carbamoyltransferase superfamily. OTCase family.

The protein localises to the cytoplasm. The enzyme catalyses carbamoyl phosphate + L-ornithine = L-citrulline + phosphate + H(+). Its pathway is amino-acid biosynthesis; L-arginine biosynthesis; L-arginine from L-ornithine and carbamoyl phosphate: step 1/3. Its function is as follows. Reversibly catalyzes the transfer of the carbamoyl group from carbamoyl phosphate (CP) to the N(epsilon) atom of ornithine (ORN) to produce L-citrulline. The polypeptide is Ornithine carbamoyltransferase (Cupriavidus pinatubonensis (strain JMP 134 / LMG 1197) (Cupriavidus necator (strain JMP 134))).